Reading from the N-terminus, the 418-residue chain is Mitochondrial outer membrane protein SLC25A46 (418 aa).

Phosphoserine occurs at positions 32 and 35. Phosphothreonine is present on Thr45. Residues 46–96 (PPDIPGSRNLHWGEKSPSYGVPSAPPTLEGPAEEPFPGGGDGPRPGRSSEQ) are disordered. The stretch at 96-187 (QLNRFAGFGI…GIISEFTPLP (92 aa)) is one Solcar 1 repeat. Transmembrane regions (helical) follow at residues 103–123 (FGIG…CIVL), 167–187 (FIVQ…TPLP), 202–222 (HLLL…ASLI), 258–278 (LLPL…HYII), 314–334 (FPEL…LYPL), and 382–402 (VFGF…HATI). A Solcar 2 repeat occupies 311–416 (DAYFPELIAN…KIIYSTLLQN (106 aa)).

This sequence belongs to the mitochondrial carrier (TC 2.A.29) family. As to quaternary structure, associates with the mitochondrial contact site and cristae organizing system (MICOS) complex. May associate with the endoplasmic reticulum membrane protein complex (EMC). As to expression, widely expressed. Highly expressed in hindbrain, spinal cord and brain coronal sections containing corpus callosum, fornix, optic chiasm, thalamus, hypothalamus, midbrain, pons and cerebellum.

Its subcellular location is the mitochondrion outer membrane. Its function is as follows. Transmembrane protein of the mitochondrial outer membrane that controls mitochondrial organization. May regulate the assembly of the MICOS (mitochondrial contact site and cristae organizing system) complex which is essential to the biogenesis and dynamics of mitochondrial cristae, the inwards folds of the inner mitochondrial membrane. Through its interaction with the EMC (endoplasmic reticulum membrane protein complex), could regulate mitochondrial lipid homeostasis and thereby mitochondrial fission. The chain is Mitochondrial outer membrane protein SLC25A46 from Rattus norvegicus (Rat).